Consider the following 339-residue polypeptide: Glycerol-3-phosphate dehydrogenase [NAD(P)+] (339 aa).

NADPH is bound by residues S15, Y16, H36, and K110. K110, G139, and T141 together coordinate sn-glycerol 3-phosphate. Residue A143 coordinates NADPH. The sn-glycerol 3-phosphate site is built by K195, D248, S258, R259, and N260. K195 serves as the catalytic Proton acceptor. Residue R259 participates in NADPH binding. V283 and E285 together coordinate NADPH.

It belongs to the NAD-dependent glycerol-3-phosphate dehydrogenase family.

The protein resides in the cytoplasm. It carries out the reaction sn-glycerol 3-phosphate + NAD(+) = dihydroxyacetone phosphate + NADH + H(+). The catalysed reaction is sn-glycerol 3-phosphate + NADP(+) = dihydroxyacetone phosphate + NADPH + H(+). The protein operates within membrane lipid metabolism; glycerophospholipid metabolism. Its function is as follows. Catalyzes the reduction of the glycolytic intermediate dihydroxyacetone phosphate (DHAP) to sn-glycerol 3-phosphate (G3P), the key precursor for phospholipid synthesis. The chain is Glycerol-3-phosphate dehydrogenase [NAD(P)+] from Klebsiella pneumoniae (strain 342).